Reading from the N-terminus, the 505-residue chain is ATP synthase subunit alpha, chloroplastic (505 aa).

170–177 (GDRQTGKT) contributes to the ATP binding site.

The protein belongs to the ATPase alpha/beta chains family. As to quaternary structure, F-type ATPases have 2 components, CF(1) - the catalytic core - and CF(0) - the membrane proton channel. CF(1) has five subunits: alpha(3), beta(3), gamma(1), delta(1), epsilon(1). CF(0) has four main subunits: a, b, b' and c.

It localises to the plastid. Its subcellular location is the chloroplast thylakoid membrane. The catalysed reaction is ATP + H2O + 4 H(+)(in) = ADP + phosphate + 5 H(+)(out). Functionally, produces ATP from ADP in the presence of a proton gradient across the membrane. The alpha chain is a regulatory subunit. This is ATP synthase subunit alpha, chloroplastic from Oenothera parviflora (Small-flowered evening primrose).